Here is a 249-residue protein sequence, read N- to C-terminus: Low affinity immunoglobulin gamma Fc region receptor III-A (249 aa).

The first 16 residues, 1-16 (MWQLLPSTALLLVASA), serve as a signal peptide directing secretion. Over 17 to 198 (RPQAADLPKA…IQGPPVPSTS (182 aa)) the chain is Extracellular. Ig-like C2-type domains lie at 24-104 (PKAV…LEVH) and 119-172 (EGEP…YFCR). Cystine bridges form between Cys-47-Cys-88 and Cys-127-Cys-171. N-linked (GlcNAc...) asparagine glycans are attached at residues Asn-55, Asn-63, Asn-166, and Asn-179. Residues 199-219 (ALLPFWPHIPFAVVMALLFAV) form a helical membrane-spanning segment. Topologically, residues 220 to 249 (DTGLYFAMQRHLHNSKRAWENSKVSWKQDP) are cytoplasmic.

Forms a heterooligomeric complex with ITAM-containing signaling subunits FCER1G. Interacts (via transmembrane domain) with signaling subunits; this interaction is a prerequisite for receptor complex expression on the cell surface and intracellular signal transduction. Binds the Fc region of antigen-complexed IgG.

Its subcellular location is the cell membrane. In terms of biological role, receptor for the invariable Fc fragment of immunoglobulin gamma (IgG). Optimally activated upon binding of clustered antigen-IgG complexes displayed on cell surfaces, triggers lysis of antibody-coated cells, a process known as antibody-dependent cellular cytotoxicity (ADCC). Does not bind free monomeric IgG, thus avoiding inappropriate effector cell activation in the absence of antigenic trigger. Mediates IgG effector functions on natural killer (NK) cells. Binds antigen-IgG complexes generated upon infection and triggers NK cell-dependent cytokine production and degranulation to limit viral load and propagation. Fc-binding subunit that associates with FCER1G adapter to form functional signaling complexes. Following the engagement of antigen-IgG complexes, triggers phosphorylation of immunoreceptor tyrosine-based activation motif (ITAM)-containing adapter with subsequent activation of phosphatidylinositol 3-kinase signaling and sustained elevation of intracellular calcium that ultimately drive NK cell activation. Mediates enhanced ADCC in response to afucosylated IgGs. The polypeptide is Low affinity immunoglobulin gamma Fc region receptor III-A (Mustela putorius furo (European domestic ferret)).